The sequence spans 586 residues: Merlin (586 aa).

Phosphoserine is present on Ser9. Residues 18-307 (FTVRIVTMDA…GNHDLFMRRR (290 aa)) form the FERM domain. The tract at residues 325–354 (KARKQMERQRLAREKQMREEAERSRDEPER) is disordered. Position 514 is a phosphoserine; by PAK (Ser514). The interval 557-586 (LHSEHSDSGTSSKHNTIKKPQAQGRRPICI) is disordered.

In terms of assembly, interacts with NHERF1, HGS and AGAP2. Interacts with SGSM3. Interacts (via FERM domain) with MPP1. Interacts with LAYN and WWC1. Interacts with the CUL4A-RBX1-DDB1-VprBP/DCAF1 E3 ubiquitin-protein ligase complex. The unphosphorylated form interacts (via FERM domain) with VPRBP/DCAF1. Interacts (via FERM domain) with NOP53; the interaction is direct. Interacts with SCHIP1; the interaction is direct. In terms of processing, ubiquitinated by the CUL4A-RBX1-DDB1-DCAF1/VprBP E3 ubiquitin-protein ligase complex for ubiquitination and subsequent proteasome-dependent degradation. Phosphorylation of Ser-514 inhibits nuclear localization by disrupting the intramolecular association of the FERM domain with the C-terminal tail. The dephosphorylation of Ser-514 favors the interaction with NOP53.

It is found in the cell membrane. It localises to the cell projection. The protein localises to the cytoplasm. The protein resides in the cytoskeleton. Its subcellular location is the nucleus. Its function is as follows. Probable regulator of the Hippo/SWH (Sav/Wts/Hpo) signaling pathway, a signaling pathway that plays a pivotal role in tumor suppression by restricting proliferation and promoting apoptosis. Along with WWC1 can synergistically induce the phosphorylation of LATS1 and LATS2 and can probably function in the regulation of the Hippo/SWH (Sav/Wts/Hpo) signaling pathway. May act as a membrane stabilizing protein. May inhibit PI3 kinase by binding to AGAP2 and impairing its stimulating activity. Suppresses cell proliferation and tumorigenesis by inhibiting the CUL4A-RBX1-DDB1-VprBP/DCAF1 E3 ubiquitin-protein ligase complex Plays a role in lens development and is required for complete fiber cell terminal differentiation, maintenance of cell polarity and separation of the lens vesicle from the corneal epithelium. The polypeptide is Merlin (Nf2) (Rattus norvegicus (Rat)).